We begin with the raw amino-acid sequence, 61 residues long: Early 3 Conserved Region 1-alpha protein (61 aa).

The Lumenal portion of the chain corresponds to 1-14 (MSNSSNSTSLSNFS). N-linked (GlcNAc...) asparagine; by host glycosylation is found at Asn-3, Asn-6, and Asn-12. The helical transmembrane segment at 15-35 (GIGVGVILTLVILFILILALL) threads the bilayer. Over 36-61 (CLRVAACCTHVCTYCQLFKRWGQHPR) the chain is Cytoplasmic.

This sequence belongs to the adenoviridae E3-CR1 family. As to quaternary structure, interacts with E3 RID alpha and E3 RID beta. In terms of processing, only 1 of 3 three potential glycosylation sites is glycosylated. Oligosaccharides are not processed from high mannose to the complex type because the protein is retained in the endoplasmic reticulum.

The protein localises to the host endoplasmic reticulum membrane. The protein resides in the host cell membrane. In terms of biological role, prevents infected cell apoptosis induced by the host immune system. May act by down-regulating host TRAIL receptors. May act in complex with E3 RID alpha and beta. May play a role on cellular apoptosis regulation in the ER. This Human adenovirus C serotype 2 (HAdV-2) protein is Early 3 Conserved Region 1-alpha protein.